The sequence spans 175 residues: Co-chaperone protein HscB homolog (175 aa).

One can recognise a J domain in the interval 7–79 (SHFELFHLPA…LKRATYLLHL (73 aa)).

Belongs to the HscB family. Interacts with HscA and stimulates its ATPase activity.

Its function is as follows. Co-chaperone involved in the maturation of iron-sulfur cluster-containing proteins. Seems to help targeting proteins to be folded toward HscA. In Burkholderia thailandensis (strain ATCC 700388 / DSM 13276 / CCUG 48851 / CIP 106301 / E264), this protein is Co-chaperone protein HscB homolog.